We begin with the raw amino-acid sequence, 652 residues long: Acetyl-coenzyme A synthetase (652 aa).

Residues 189-192 (RGGK) and T311 contribute to the CoA site. Residues 387–389 (GEP), 411–416 (DTWWQT), D500, and R515 contribute to the ATP site. S523 contacts CoA. R526 provides a ligand contact to ATP. The Mg(2+) site is built by V537, H539, and V542. CoA is bound at residue R584. An N6-acetyllysine modification is found at K609.

Belongs to the ATP-dependent AMP-binding enzyme family. Requires Mg(2+) as cofactor. Acetylated. Deacetylation by the SIR2-homolog deacetylase activates the enzyme.

The enzyme catalyses acetate + ATP + CoA = acetyl-CoA + AMP + diphosphate. Its function is as follows. Catalyzes the conversion of acetate into acetyl-CoA (AcCoA), an essential intermediate at the junction of anabolic and catabolic pathways. AcsA undergoes a two-step reaction. In the first half reaction, AcsA combines acetate with ATP to form acetyl-adenylate (AcAMP) intermediate. In the second half reaction, it can then transfer the acetyl group from AcAMP to the sulfhydryl group of CoA, forming the product AcCoA. In Rhizobium rhizogenes (Agrobacterium rhizogenes), this protein is Acetyl-coenzyme A synthetase.